The sequence spans 416 residues: UDP-N-acetylglucosamine 1-carboxyvinyltransferase (416 aa).

22–23 (KN) provides a ligand contact to phosphoenolpyruvate. Residue Arg-92 coordinates UDP-N-acetyl-alpha-D-glucosamine. Cys-116 (proton donor) is an active-site residue. The residue at position 116 (Cys-116) is a 2-(S-cysteinyl)pyruvic acid O-phosphothioketal. Residues 121–125 (RPVDQ), Asp-304, and Ile-326 contribute to the UDP-N-acetyl-alpha-D-glucosamine site.

Belongs to the EPSP synthase family. MurA subfamily.

It localises to the cytoplasm. The enzyme catalyses phosphoenolpyruvate + UDP-N-acetyl-alpha-D-glucosamine = UDP-N-acetyl-3-O-(1-carboxyvinyl)-alpha-D-glucosamine + phosphate. It functions in the pathway cell wall biogenesis; peptidoglycan biosynthesis. Functionally, cell wall formation. Adds enolpyruvyl to UDP-N-acetylglucosamine. In Janthinobacterium sp. (strain Marseille) (Minibacterium massiliensis), this protein is UDP-N-acetylglucosamine 1-carboxyvinyltransferase.